The following is a 76-amino-acid chain: uncharacterized protein (76 aa).

This is an uncharacterized protein from African swine fever virus (isolate Tick/Malawi/Lil 20-1/1983) (ASFV).